The sequence spans 612 residues: Dihydroxy-acid dehydratase (612 aa).

Aspartate 81 serves as a coordination point for Mg(2+). Residue cysteine 122 coordinates [2Fe-2S] cluster. Mg(2+) contacts are provided by aspartate 123 and lysine 124. Lysine 124 is subject to N6-carboxylysine. A [2Fe-2S] cluster-binding site is contributed by cysteine 195. Glutamate 491 contacts Mg(2+). Serine 517 functions as the Proton acceptor in the catalytic mechanism.

Belongs to the IlvD/Edd family. Homodimer. [2Fe-2S] cluster is required as a cofactor. The cofactor is Mg(2+).

The enzyme catalyses (2R)-2,3-dihydroxy-3-methylbutanoate = 3-methyl-2-oxobutanoate + H2O. The catalysed reaction is (2R,3R)-2,3-dihydroxy-3-methylpentanoate = (S)-3-methyl-2-oxopentanoate + H2O. The protein operates within amino-acid biosynthesis; L-isoleucine biosynthesis; L-isoleucine from 2-oxobutanoate: step 3/4. It functions in the pathway amino-acid biosynthesis; L-valine biosynthesis; L-valine from pyruvate: step 3/4. Functions in the biosynthesis of branched-chain amino acids. Catalyzes the dehydration of (2R,3R)-2,3-dihydroxy-3-methylpentanoate (2,3-dihydroxy-3-methylvalerate) into 2-oxo-3-methylpentanoate (2-oxo-3-methylvalerate) and of (2R)-2,3-dihydroxy-3-methylbutanoate (2,3-dihydroxyisovalerate) into 2-oxo-3-methylbutanoate (2-oxoisovalerate), the penultimate precursor to L-isoleucine and L-valine, respectively. In Sinorhizobium medicae (strain WSM419) (Ensifer medicae), this protein is Dihydroxy-acid dehydratase.